The sequence spans 149 residues: Lipoprotein MlpF (149 aa).

Residues 1 to 17 form the signal peptide; sequence MKIINILFCLFLLLLNS. Residue cysteine 18 is the site of N-palmitoyl cysteine attachment. The S-diacylglycerol cysteine moiety is linked to residue cysteine 18. The interval 26–58 is disordered; it reads LKNNAQQTKSRGKRDLTQKEATPEKPKSKEELL. A compositionally biased stretch (basic and acidic residues) spans 38–58; it reads KRDLTQKEATPEKPKSKEELL.

It belongs to the Multicopy lipoprotein (Mlp) family.

The protein resides in the cell outer membrane. In terms of biological role, an outer membrane protein that may participate in pathogenesis. Some human Lyme disease patients have antibodies against this protein. The Mlp proteins probably undergo intragenic recombination, generating new alleles. In Borreliella burgdorferi (strain ATCC 35210 / DSM 4680 / CIP 102532 / B31) (Borrelia burgdorferi), this protein is Lipoprotein MlpF.